Here is a 223-residue protein sequence, read N- to C-terminus: Thiamine-phosphate synthase (223 aa).

Residues Gln-45–Lys-49 and Asn-77 contribute to the 4-amino-2-methyl-5-(diphosphooxymethyl)pyrimidine site. 2 residues coordinate Mg(2+): Asp-78 and Asp-97. Residue Thr-116 participates in 4-amino-2-methyl-5-(diphosphooxymethyl)pyrimidine binding. Ser-142–Thr-144 lines the 2-[(2R,5Z)-2-carboxy-4-methylthiazol-5(2H)-ylidene]ethyl phosphate pocket. Position 145 (Lys-145) interacts with 4-amino-2-methyl-5-(diphosphooxymethyl)pyrimidine. 2-[(2R,5Z)-2-carboxy-4-methylthiazol-5(2H)-ylidene]ethyl phosphate is bound by residues Gly-173 and Val-193 to Thr-194.

It belongs to the thiamine-phosphate synthase family. The cofactor is Mg(2+).

The enzyme catalyses 2-[(2R,5Z)-2-carboxy-4-methylthiazol-5(2H)-ylidene]ethyl phosphate + 4-amino-2-methyl-5-(diphosphooxymethyl)pyrimidine + 2 H(+) = thiamine phosphate + CO2 + diphosphate. The catalysed reaction is 2-(2-carboxy-4-methylthiazol-5-yl)ethyl phosphate + 4-amino-2-methyl-5-(diphosphooxymethyl)pyrimidine + 2 H(+) = thiamine phosphate + CO2 + diphosphate. It carries out the reaction 4-methyl-5-(2-phosphooxyethyl)-thiazole + 4-amino-2-methyl-5-(diphosphooxymethyl)pyrimidine + H(+) = thiamine phosphate + diphosphate. The protein operates within cofactor biosynthesis; thiamine diphosphate biosynthesis; thiamine phosphate from 4-amino-2-methyl-5-diphosphomethylpyrimidine and 4-methyl-5-(2-phosphoethyl)-thiazole: step 1/1. In terms of biological role, condenses 4-methyl-5-(beta-hydroxyethyl)thiazole monophosphate (THZ-P) and 2-methyl-4-amino-5-hydroxymethyl pyrimidine pyrophosphate (HMP-PP) to form thiamine monophosphate (TMP). The polypeptide is Thiamine-phosphate synthase (Dictyoglomus turgidum (strain DSM 6724 / Z-1310)).